The chain runs to 275 residues: Dermonecrotic toxin SpeSicTox-betaIIA1 (275 aa).

The active site involves His5. The Mg(2+) site is built by Glu25 and Asp27. His41 functions as the Nucleophile in the catalytic mechanism. Intrachain disulfides connect Cys45-Cys51 and Cys47-Cys190. Asp85 contacts Mg(2+).

This sequence belongs to the arthropod phospholipase D family. Class II subfamily. Mg(2+) is required as a cofactor. As to expression, expressed by the venom gland.

The protein localises to the secreted. The catalysed reaction is an N-(acyl)-sphingosylphosphocholine = an N-(acyl)-sphingosyl-1,3-cyclic phosphate + choline. The enzyme catalyses an N-(acyl)-sphingosylphosphoethanolamine = an N-(acyl)-sphingosyl-1,3-cyclic phosphate + ethanolamine. It carries out the reaction a 1-acyl-sn-glycero-3-phosphocholine = a 1-acyl-sn-glycero-2,3-cyclic phosphate + choline. It catalyses the reaction a 1-acyl-sn-glycero-3-phosphoethanolamine = a 1-acyl-sn-glycero-2,3-cyclic phosphate + ethanolamine. In terms of biological role, dermonecrotic toxins cleave the phosphodiester linkage between the phosphate and headgroup of certain phospholipids (sphingolipid and lysolipid substrates), forming an alcohol (often choline) and a cyclic phosphate. This toxin acts on sphingomyelin (SM). It may also act on ceramide phosphoethanolamine (CPE), lysophosphatidylcholine (LPC) and lysophosphatidylethanolamine (LPE), but not on lysophosphatidylserine (LPS), and lysophosphatidylglycerol (LPG). It acts by transphosphatidylation, releasing exclusively cyclic phosphate products as second products. Induces dermonecrosis, hemolysis, increased vascular permeability, edema, inflammatory response, and platelet aggregation. The chain is Dermonecrotic toxin SpeSicTox-betaIIA1 from Sicarius peruensis (Six-eyed sand spider).